The chain runs to 120 residues: Immunoglobulin kappa variable 2-24 (120 aa).

An N-terminal signal peptide occupies residues 1–19 (MRLLAQLLGLLMLWVPGSS). The region spanning 20 to 120 (GDIVMTQTPL…YYCMQATQFP (101 aa)) is the Ig-like domain. The tract at residues 21–43 (DIVMTQTPLSSPVTLGQPASISC) is framework-1. Cysteines 43 and 113 form a disulfide. Residues 44–59 (RSSQSLVHSDGNTYLS) form a complementarity-determining-1 region. The segment at 60–74 (WLQQRPGQPPRLLIY) is framework-2. The segment at 75-81 (KISNRFS) is complementarity-determining-2. A framework-3 region spans residues 82–113 (GVPDRFSGSGAGTDFTLKISRVEAEDVGVYYC). Positions 114–120 (MQATQFP) are complementarity-determining-3.

As to quaternary structure, immunoglobulins are composed of two identical heavy chains and two identical light chains; disulfide-linked.

It is found in the secreted. Its subcellular location is the cell membrane. V region of the variable domain of immunoglobulin light chains that participates in the antigen recognition. Immunoglobulins, also known as antibodies, are membrane-bound or secreted glycoproteins produced by B lymphocytes. In the recognition phase of humoral immunity, the membrane-bound immunoglobulins serve as receptors which, upon binding of a specific antigen, trigger the clonal expansion and differentiation of B lymphocytes into immunoglobulins-secreting plasma cells. Secreted immunoglobulins mediate the effector phase of humoral immunity, which results in the elimination of bound antigens. The antigen binding site is formed by the variable domain of one heavy chain, together with that of its associated light chain. Thus, each immunoglobulin has two antigen binding sites with remarkable affinity for a particular antigen. The variable domains are assembled by a process called V-(D)-J rearrangement and can then be subjected to somatic hypermutations which, after exposure to antigen and selection, allow affinity maturation for a particular antigen. In Homo sapiens (Human), this protein is Immunoglobulin kappa variable 2-24.